A 94-amino-acid chain; its full sequence is Pyrimidine/purine nucleoside phosphorylase (94 aa).

This sequence belongs to the nucleoside phosphorylase PpnP family.

It carries out the reaction a purine D-ribonucleoside + phosphate = a purine nucleobase + alpha-D-ribose 1-phosphate. The catalysed reaction is adenosine + phosphate = alpha-D-ribose 1-phosphate + adenine. It catalyses the reaction cytidine + phosphate = cytosine + alpha-D-ribose 1-phosphate. The enzyme catalyses guanosine + phosphate = alpha-D-ribose 1-phosphate + guanine. It carries out the reaction inosine + phosphate = alpha-D-ribose 1-phosphate + hypoxanthine. The catalysed reaction is thymidine + phosphate = 2-deoxy-alpha-D-ribose 1-phosphate + thymine. It catalyses the reaction uridine + phosphate = alpha-D-ribose 1-phosphate + uracil. The enzyme catalyses xanthosine + phosphate = alpha-D-ribose 1-phosphate + xanthine. Its function is as follows. Catalyzes the phosphorolysis of diverse nucleosides, yielding D-ribose 1-phosphate and the respective free bases. Can use uridine, adenosine, guanosine, cytidine, thymidine, inosine and xanthosine as substrates. Also catalyzes the reverse reactions. The sequence is that of Pyrimidine/purine nucleoside phosphorylase from Citrobacter koseri (strain ATCC BAA-895 / CDC 4225-83 / SGSC4696).